Reading from the N-terminus, the 89-residue chain is Small ribosomal subunit protein uS17 (89 aa).

This sequence belongs to the universal ribosomal protein uS17 family. As to quaternary structure, part of the 30S ribosomal subunit.

Functionally, one of the primary rRNA binding proteins, it binds specifically to the 5'-end of 16S ribosomal RNA. The sequence is that of Small ribosomal subunit protein uS17 from Xylella fastidiosa (strain Temecula1 / ATCC 700964).